Reading from the N-terminus, the 193-residue chain is CD70 antigen (193 aa).

Residues 1–17 (MPEEGSGCSVRRRPYGC) lie on the Cytoplasmic side of the membrane. A helical; Signal-anchor for type II membrane protein membrane pass occupies residues 18-38 (VLRAALVPLVAGLVICLVVCI). At 39-193 (QRFAQAQQQL…TFFGVQWVRP (155 aa)) the chain is on the extracellular side. Residues 56–191 (DVAELQLNHT…DETFFGVQWV (136 aa)) enclose the THD domain. Residue Asn63 is glycosylated (N-linked (GlcNAc...) asparagine). Disulfide bonds link Cys115/Cys151 and Cys133/Cys168. A glycan (N-linked (GlcNAc...) asparagine) is linked at Asn170.

This sequence belongs to the tumor necrosis factor family. In terms of assembly, homotrimer. N-glycosylated.

The protein localises to the cell membrane. Its function is as follows. Expressed at the plasma membrane of B cells, it is the ligand of the CD27 receptor which is specifically expressed at the surface of T cells. The CD70-CD27 signaling pathway mediates antigen-specific T cell activation and expansion which in turn provides immune surveillance of B cells. This Homo sapiens (Human) protein is CD70 antigen.